Reading from the N-terminus, the 587-residue chain is Cyclic di-GMP phosphodiesterase PA2567 (587 aa).

Residues 28–157 (DEVFEEILAA…LEHFARLVMA (130 aa)) enclose the GAF domain. Residues 192–327 (GALTVIAADL…GVGWARYNPP (136 aa)) enclose the GGDEF domain. Positions 335 to 587 (AFTLLTSLSQ…PEQLEDWLRR (253 aa)) constitute an EAL domain.

It carries out the reaction 3',3'-c-di-GMP + H2O = 5'-phosphoguanylyl(3'-&gt;5')guanosine + H(+). Functionally, phosphodiesterase (PDE) that catalyzes the hydrolysis of cyclic diguanylate (c-di-GMP) to 5'-pGpG. The chain is Cyclic di-GMP phosphodiesterase PA2567 from Pseudomonas aeruginosa (strain ATCC 15692 / DSM 22644 / CIP 104116 / JCM 14847 / LMG 12228 / 1C / PRS 101 / PAO1).